A 597-amino-acid chain; its full sequence is Kelch-like protein 21 (597 aa).

Positions 35–103 constitute a BTB domain; the sequence is LDVTLEAAGG…SYTGRVAVSG (69 aa). In terms of domain architecture, BACK spans 138–239; sequence CLDMQDFAEA…RRFYLLAHVE (102 aa). Kelch repeat units lie at residues 287 to 335, 336 to 382, 384 to 422, 423 to 470, 472 to 512, and 513 to 560; these read ILVL…ALGN, DIYV…VLNG, LYVV…ACRG, RLYA…TLNG, MYFV…ALGG, and KLYV…SIFR. Residues 570 to 597 are disordered; the sequence is GRGFELNSGSSDVDAGHHRLPQNPEELQ.

Component of the BCR(KLHL21) E3 ubiquitin ligase complex, at least composed of CUL3, KLHL21 and RBX1.

It localises to the cytoplasm. The protein localises to the cytoskeleton. The protein resides in the spindle. Its pathway is protein modification; protein ubiquitination. Its function is as follows. Substrate-specific adapter of BCR (BTB-CUL3-RBX1) E3 ubiquitin-protein ligase complex required for efficient chromosome alignment and cytokinesis. The BCR(KLHL21) E3 ubiquitin ligase complex regulates localization of the chromosomal passenger complex (CPC) from chromosomes to the spindle midzone in anaphase and mediates the ubiquitination of AURKB. Ubiquitination of AURKB by BCR(KLHL21) E3 ubiquitin ligase complex may not lead to its degradation by the proteasome. The protein is Kelch-like protein 21 (Klhl21) of Rattus norvegicus (Rat).